The following is a 469-amino-acid chain: Threonine synthase (469 aa).

N6-(pyridoxal phosphate)lysine is present on K112.

It belongs to the threonine synthase family. Requires pyridoxal 5'-phosphate as cofactor.

The catalysed reaction is O-phospho-L-homoserine + H2O = L-threonine + phosphate. It functions in the pathway amino-acid biosynthesis; L-threonine biosynthesis; L-threonine from L-aspartate: step 5/5. Catalyzes the gamma-elimination of phosphate from L-phosphohomoserine and the beta-addition of water to produce L-threonine. In Pseudomonas aeruginosa (strain ATCC 15692 / DSM 22644 / CIP 104116 / JCM 14847 / LMG 12228 / 1C / PRS 101 / PAO1), this protein is Threonine synthase (thrC).